A 302-amino-acid polypeptide reads, in one-letter code: Bifunctional protein FolD (302 aa).

NADP(+) is bound by residues 165–167, serine 190, and isoleucine 231; that span reads GRS.

Belongs to the tetrahydrofolate dehydrogenase/cyclohydrolase family. As to quaternary structure, homodimer.

The enzyme catalyses (6R)-5,10-methylene-5,6,7,8-tetrahydrofolate + NADP(+) = (6R)-5,10-methenyltetrahydrofolate + NADPH. It carries out the reaction (6R)-5,10-methenyltetrahydrofolate + H2O = (6R)-10-formyltetrahydrofolate + H(+). The protein operates within one-carbon metabolism; tetrahydrofolate interconversion. Functionally, catalyzes the oxidation of 5,10-methylenetetrahydrofolate to 5,10-methenyltetrahydrofolate and then the hydrolysis of 5,10-methenyltetrahydrofolate to 10-formyltetrahydrofolate. The protein is Bifunctional protein FolD of Prochlorococcus marinus (strain MIT 9211).